The primary structure comprises 119 residues: Large ribosomal subunit protein bL20 (119 aa).

Belongs to the bacterial ribosomal protein bL20 family.

Its function is as follows. Binds directly to 23S ribosomal RNA and is necessary for the in vitro assembly process of the 50S ribosomal subunit. It is not involved in the protein synthesizing functions of that subunit. The sequence is that of Large ribosomal subunit protein bL20 from Bacillus licheniformis (strain ATCC 14580 / DSM 13 / JCM 2505 / CCUG 7422 / NBRC 12200 / NCIMB 9375 / NCTC 10341 / NRRL NRS-1264 / Gibson 46).